Consider the following 239-residue polypeptide: Pyridoxine 5'-phosphate synthase (239 aa).

Asn7 contributes to the 3-amino-2-oxopropyl phosphate binding site. 1-deoxy-D-xylulose 5-phosphate is bound at residue 9-10 (DH). Residue Arg18 coordinates 3-amino-2-oxopropyl phosphate. Catalysis depends on His43, which acts as the Proton acceptor. Arg45 and His50 together coordinate 1-deoxy-D-xylulose 5-phosphate. Catalysis depends on Glu70, which acts as the Proton acceptor. Thr100 contributes to the 1-deoxy-D-xylulose 5-phosphate binding site. The active-site Proton donor is the His191. 3-amino-2-oxopropyl phosphate is bound by residues Gly192 and 213–214 (GH).

It belongs to the PNP synthase family. In terms of assembly, homooctamer; tetramer of dimers.

The protein localises to the cytoplasm. The catalysed reaction is 3-amino-2-oxopropyl phosphate + 1-deoxy-D-xylulose 5-phosphate = pyridoxine 5'-phosphate + phosphate + 2 H2O + H(+). The protein operates within cofactor biosynthesis; pyridoxine 5'-phosphate biosynthesis; pyridoxine 5'-phosphate from D-erythrose 4-phosphate: step 5/5. Catalyzes the complicated ring closure reaction between the two acyclic compounds 1-deoxy-D-xylulose-5-phosphate (DXP) and 3-amino-2-oxopropyl phosphate (1-amino-acetone-3-phosphate or AAP) to form pyridoxine 5'-phosphate (PNP) and inorganic phosphate. This chain is Pyridoxine 5'-phosphate synthase, found in Nostoc sp. (strain PCC 7120 / SAG 25.82 / UTEX 2576).